Consider the following 200-residue polypeptide: Peptidyl-tRNA hydrolase (200 aa).

Y15 provides a ligand contact to tRNA. The active-site Proton acceptor is the H20. TRNA is bound by residues Y66, N68, and N114.

This sequence belongs to the PTH family. Monomer.

It is found in the cytoplasm. It catalyses the reaction an N-acyl-L-alpha-aminoacyl-tRNA + H2O = an N-acyl-L-amino acid + a tRNA + H(+). In terms of biological role, hydrolyzes ribosome-free peptidyl-tRNAs (with 1 or more amino acids incorporated), which drop off the ribosome during protein synthesis, or as a result of ribosome stalling. Functionally, catalyzes the release of premature peptidyl moieties from peptidyl-tRNA molecules trapped in stalled 50S ribosomal subunits, and thus maintains levels of free tRNAs and 50S ribosomes. The polypeptide is Peptidyl-tRNA hydrolase (Paraburkholderia xenovorans (strain LB400)).